We begin with the raw amino-acid sequence, 955 residues long: MTENPFHYLVETLSGTSDKTFFNVSKLKATEYDSLPYCIRVVLEAVVRNCDGVLVKEQDAFNILNWKTKCEFKEIPFLPARVMLQDFTGIPAMVDFAAMRDAISKFGKDPKQVNPACPTDLIADHSLQLDFTKCIAAQNVSGLPAVETHRPTTTPGKTPGRKAQCRSQGGCKGACDLGAANGSSREQIENTPMLCPFHLQPIAEPETALKSLEIEFNRNKERLQFFKWCSKAFQNVAVIPPETGTVHQVNLEFLSRVVMEEKGCIYPDSVLGTDSHTTMVNGLGILGLGVGGIESEAAMLGVPITLTLPEVVGCELTGTINPIATSIDVVLSITKHLKQAGVAGTFVEFFGNGVSQLSVADRTTIANMCPEYGATVAFFPVDSVTLQHLKQTGVDLQCVKTFENYLKAVKLLRQENVQQPLYSKVLQINLNSIVPYVSGPKRPQDRISVMDMKKDFETCLKEKTGLKGFQIPEEKQNIMVPVTYGNSEYSLSHGCVVIAAVTSCTNNCNPSVMLTAGLLAKKAVEAGLTVKPYIKTSLSPGSGTVTYYLSASGVLPYLSKLGFDIIGYGCARCVGNTNPLPESIVTAIKEGELVACGVFSGNKHFEGNRCSCVCANYLASPPLVVAYALAGTVNIDLQTEPLGENAQGKKIFLQDIWPSREEVLEVEETLVIPSMFSELKLKIEKQNTRWNLLDAPESTLFPWDLRSTYIRSPPFFHKLEKIPPPIQPIERAYVLLYLGDSVTTDHMSPAGSIPRTSPAAKYLMQKNLVPREFNSYGARRGNDAVMTRGTFANMKLFNKLVGKTGPKTIHLPSGQTMDVFDAAELYQRSEIPLIIIAGKKYGLGNSRDWAAKGPFLLGVRVVIAESYEKIHKDHLVGMGIAPLQFLSGENAETLGLSGKEQYSLSLPVDLTPGHKVEIKTNTGKIFHVIAAFDNEAEVTLYKHGGILSYVARKYL.

3 residues coordinate [4Fe-4S] cluster: C504, C570, and C573.

This sequence belongs to the aconitase/IPM isomerase family. Requires [4Fe-4S] cluster as cofactor. Ubiquitinated and degraded by the proteasome in presence of high level of iron and oxygen.

The protein localises to the cytoplasm. Its function is as follows. RNA-binding protein that binds to iron-responsive elements (IRES), which are stem-loop structures found in the 5'-UTR of ferritin, and delta aminolevulinic acid synthase mRNAs, and in the 3'-UTR of transferrin receptor mRNA. Binding to the IRE element in ferritin results in the repression of its mRNA translation. Binding of the protein to the transferrin receptor mRNA inhibits the degradation of this otherwise rapidly degraded mRNA. The polypeptide is Iron-responsive element-binding protein 2 (ireb2) (Xenopus laevis (African clawed frog)).